The sequence spans 224 residues: Giant hemoglobin linker AV-1 chain (224 aa).

In terms of domain architecture, LDL-receptor class A spans 62–103 (HWCPSKYHRCGNSPQCMSNMAFCDGVNDCKNHFDEDENRCVV). 3 disulfides stabilise this stretch: C64-C77, C71-C90, and C84-C101. N108 is a glycosylation site (N-linked (GlcNAc...) asparagine).

As to quaternary structure, giant hemoglobin is composed of four heme-containing chains (AI to AIV), and two linker chains (AV and AVI).

In terms of biological role, acts as a linker for the assembly of heme-containing chains in the construction of giant hemoglobin. The chain is Giant hemoglobin linker AV-1 chain from Lamellibrachia sp. (Deep-sea giant tube worm).